Reading from the N-terminus, the 270-residue chain is Sulfur carrier protein FdhD (270 aa).

The active-site Cysteine persulfide intermediate is the cysteine 116. 253 to 258 (FAREGK) is a Mo-bis(molybdopterin guanine dinucleotide) binding site.

It belongs to the FdhD family.

Its subcellular location is the cytoplasm. Functionally, required for formate dehydrogenase (FDH) activity. Acts as a sulfur carrier protein that transfers sulfur from IscS to the molybdenum cofactor prior to its insertion into FDH. In Haemophilus influenzae (strain 86-028NP), this protein is Sulfur carrier protein FdhD.